Reading from the N-terminus, the 347-residue chain is Protein RecA (347 aa).

67 to 74 (GPESSGKT) contributes to the ATP binding site.

The protein belongs to the RecA family.

Its subcellular location is the cytoplasm. Functionally, can catalyze the hydrolysis of ATP in the presence of single-stranded DNA, the ATP-dependent uptake of single-stranded DNA by duplex DNA, and the ATP-dependent hybridization of homologous single-stranded DNAs. It interacts with LexA causing its activation and leading to its autocatalytic cleavage. This is Protein RecA from Sulfurovum sp. (strain NBC37-1).